Consider the following 702-residue polypeptide: Kinesin-like protein KIF3A (702 aa).

Residues 14–345 form the Kinesin motor domain; the sequence is NVKVVVRCRP…LRYANRAKNI (332 aa). 100–107 contacts ATP; that stretch reads GQTGTGKT. A coiled-coil region spans residues 355-593; that stretch reads PKDALLRQFQ…LSRELRLQML (239 aa). Disordered stretches follow at residues 372–424 and 667–702; these read KKLE…KMIE and LMKL…SLLQ. The segment covering 376 to 400 has biased composition (acidic residues); sequence EGEEISGSDISGSEEDDDEEGEIGE. The segment covering 410–424 has biased composition (basic and acidic residues); that stretch reads DQAGKKKVSPDKMIE. The tract at residues 600–702 is globular; the sequence is PRDYQEMIEN…PETVIDSLLQ (103 aa). Residues 675–690 show a composition bias toward basic residues; the sequence is TSKGKARPKTGRRKRS. Serine 690 carries the phosphoserine modification.

Belongs to the TRAFAC class myosin-kinesin ATPase superfamily. Kinesin family. Kinesin II subfamily. In terms of assembly, heterodimer of KIF3A and KIF3B. Interacts with CIMAP3. Interacts with CLN3. Interacts with DCTN1. Interacts with FLCN. Interacts with AP3B1.

The protein resides in the cytoplasm. It is found in the cytoskeleton. It localises to the cell projection. Its subcellular location is the cilium. The protein localises to the microtubule organizing center. The protein resides in the centrosome. It is found in the centriole. In terms of biological role, microtubule-based anterograde translocator for membranous organelles. Plus end-directed microtubule sliding activity in vitro. Plays a role in primary cilia formation. Plays a role in centriole cohesion and subdistal appendage organization and function. Regulates the formation of the subdistal appendage via recruitment of DCTN1 to the centriole. Also required for ciliary basal feet formation and microtubule anchoring to mother centriole. In Pongo abelii (Sumatran orangutan), this protein is Kinesin-like protein KIF3A (KIF3A).